Consider the following 207-residue polypeptide: Large ribosomal subunit protein uL4 (207 aa).

The segment at 45–80 (RQGTHAVKNRSEVRGGGRKPWRQKGTGRARQGSTRS) is disordered. The span at 60–71 (GGRKPWRQKGTG) shows a compositional bias: basic residues.

It belongs to the universal ribosomal protein uL4 family. Part of the 50S ribosomal subunit.

Its function is as follows. One of the primary rRNA binding proteins, this protein initially binds near the 5'-end of the 23S rRNA. It is important during the early stages of 50S assembly. It makes multiple contacts with different domains of the 23S rRNA in the assembled 50S subunit and ribosome. Forms part of the polypeptide exit tunnel. The sequence is that of Large ribosomal subunit protein uL4 from Oceanobacillus iheyensis (strain DSM 14371 / CIP 107618 / JCM 11309 / KCTC 3954 / HTE831).